Reading from the N-terminus, the 24-residue chain is Xenoposin-precursor fragment B1 (24 aa).

In terms of tissue distribution, expressed by the skin glands.

It is found in the secreted. In terms of biological role, has antibacterial activity. The polypeptide is Xenoposin-precursor fragment B1 (Xenopus borealis (Kenyan clawed frog)).